The sequence spans 279 residues: Ribosomal RNA small subunit methyltransferase J (279 aa).

S-adenosyl-L-methionine contacts are provided by residues 138–139 (ER) and aspartate 194.

This sequence belongs to the methyltransferase superfamily. RsmJ family.

It is found in the cytoplasm. The enzyme catalyses guanosine(1516) in 16S rRNA + S-adenosyl-L-methionine = N(2)-methylguanosine(1516) in 16S rRNA + S-adenosyl-L-homocysteine + H(+). In terms of biological role, specifically methylates the guanosine in position 1516 of 16S rRNA. This chain is Ribosomal RNA small subunit methyltransferase J, found in Acinetobacter baumannii (strain AYE).